Consider the following 31-residue polypeptide: Cytochrome b6-f complex subunit 6 (31 aa).

Residues isoleucine 3 to isoleucine 23 traverse the membrane as a helical segment.

It belongs to the PetL family. In terms of assembly, the 4 large subunits of the cytochrome b6-f complex are cytochrome b6, subunit IV (17 kDa polypeptide, PetD), cytochrome f and the Rieske protein, while the 4 small subunits are PetG, PetL, PetM and PetN. The complex functions as a dimer.

Its subcellular location is the plastid. It localises to the chloroplast thylakoid membrane. In terms of biological role, component of the cytochrome b6-f complex, which mediates electron transfer between photosystem II (PSII) and photosystem I (PSI), cyclic electron flow around PSI, and state transitions. PetL is important for photoautotrophic growth as well as for electron transfer efficiency and stability of the cytochrome b6-f complex. The sequence is that of Cytochrome b6-f complex subunit 6 from Helianthus annuus (Common sunflower).